We begin with the raw amino-acid sequence, 320 residues long: Delta(7)-sterol 5(6)-desaturase erg3C (320 aa).

3 helical membrane passes run 43–63 (VISI…FFSA), 91–111 (SSLS…LAEV), and 127–147 (PWLV…IYWI). In terms of domain architecture, Fatty acid hydroxylase spans 134-283 (ILYMAFNDIG…FTWADAYFGS (150 aa)). The Histidine box-1 signature appears at 148 to 152 (HRLEH). The Histidine box-2 signature appears at 161 to 165 (HKPHH). The chain crosses the membrane as a helical span at residues 224 to 244 (YMVLFAAVQIWTILIHDGDMI). Residues 259–263 (HTLHH) carry the Histidine box-3 motif.

It belongs to the sterol desaturase family. Requires Fe cation as cofactor.

Its subcellular location is the endoplasmic reticulum membrane. In terms of biological role, delta(7)-sterol 5(6)-desaturase; part of the third module of ergosterol biosynthesis pathway that includes the late steps of the pathway. Erg3C is a minor delta(7)-sterol 5(6)-desaturase within the ergosterol pathway, erg3B being the major one. The third module or late pathway involves the ergosterol synthesis itself through consecutive reactions that mainly occur in the endoplasmic reticulum (ER) membrane. Firstly, the squalene synthase erg9 catalyzes the condensation of 2 farnesyl pyrophosphate moieties to form squalene, which is the precursor of all steroids. Squalene synthase is crucial for balancing the incorporation of farnesyl diphosphate (FPP) into sterol and nonsterol isoprene synthesis. Secondly, squalene is converted into lanosterol by the consecutive action of the squalene epoxidase erg1 and the lanosterol synthase erg7. Then, the delta(24)-sterol C-methyltransferase erg6 methylates lanosterol at C-24 to produce eburicol. Eburicol is the substrate of the sterol 14-alpha demethylase encoded by cyp51A and cyp51B, to yield 4,4,24-trimethyl ergosta-8,14,24(28)-trienol. The C-14 reductase erg24 then reduces the C14=C15 double bond which leads to 4,4-dimethylfecosterol. A sequence of further demethylations at C-4, involving the C-4 demethylation complex containing the C-4 methylsterol oxidases erg25A or erg25B, the sterol-4-alpha-carboxylate 3-dehydrogenase erg26 and the 3-keto-steroid reductase erg27, leads to the production of fecosterol via 4-methylfecosterol. The C-8 sterol isomerase erg2 then catalyzes the reaction which results in unsaturation at C-7 in the B ring of sterols and thus converts fecosterol to episterol. The sterol-C5-desaturase erg3B then catalyzes the introduction of a C-5 double bond in the B ring to produce 5-dehydroepisterol. The 2 other sterol-C5-desaturases, erg3A and erg3C, seem to be less important in ergosterol biosynthesis. The C-22 sterol desaturase erg5 further converts 5-dehydroepisterol into ergosta-5,7,22,24(28)-tetraen-3beta-ol by forming the C-22(23) double bond in the sterol side chain. Finally, ergosta-5,7,22,24(28)-tetraen-3beta-ol is substrate of the C-24(28) sterol reductases erg4A and erg4B to produce ergosterol. Possible alternative sterol biosynthetic pathways might exist from fecosterol to ergosterol, depending on the activities of the erg3 isoforms. This Aspergillus fumigatus (strain ATCC MYA-4609 / CBS 101355 / FGSC A1100 / Af293) (Neosartorya fumigata) protein is Delta(7)-sterol 5(6)-desaturase erg3C.